Here is a 208-residue protein sequence, read N- to C-terminus: Thymidylate kinase (208 aa).

7-14 (GIDGSGKS) is an ATP binding site.

This sequence belongs to the thymidylate kinase family.

It catalyses the reaction dTMP + ATP = dTDP + ADP. In terms of biological role, phosphorylation of dTMP to form dTDP in both de novo and salvage pathways of dTTP synthesis. This is Thymidylate kinase from Kosmotoga olearia (strain ATCC BAA-1733 / DSM 21960 / TBF 19.5.1).